The primary structure comprises 374 residues: Hydroxylysine kinase (374 aa).

The Proton acceptor role is filled by Asp-228.

It belongs to the aminoglycoside phosphotransferase family.

It is found in the cytoplasm. It carries out the reaction (5R)-5-hydroxy-L-lysine + GTP = (5R)-5-phosphooxy-L-lysine + GDP + H(+). Functionally, catalyzes the GTP-dependent phosphorylation of 5-hydroxy-L-lysine. In Xenopus laevis (African clawed frog), this protein is Hydroxylysine kinase (hykk).